The primary structure comprises 383 residues: Mannitol-1-phosphate 5-dehydrogenase (383 aa).

3 to 14 is an NAD(+) binding site; it reads AVHFGAGNIGRG.

Belongs to the mannitol dehydrogenase family.

It catalyses the reaction D-mannitol 1-phosphate + NAD(+) = beta-D-fructose 6-phosphate + NADH + H(+). This is Mannitol-1-phosphate 5-dehydrogenase from Lacticaseibacillus casei (strain BL23) (Lactobacillus casei).